The following is a 235-amino-acid chain: UPF0173 metal-dependent hydrolase Oant_3663 (235 aa).

It belongs to the UPF0173 family.

In Brucella anthropi (strain ATCC 49188 / DSM 6882 / CCUG 24695 / JCM 21032 / LMG 3331 / NBRC 15819 / NCTC 12168 / Alc 37) (Ochrobactrum anthropi), this protein is UPF0173 metal-dependent hydrolase Oant_3663.